Consider the following 143-residue polypeptide: Endoribonuclease YbeY (143 aa).

Residues His106, His110, and His116 each coordinate Zn(2+).

Belongs to the endoribonuclease YbeY family. The cofactor is Zn(2+).

The protein localises to the cytoplasm. Functionally, single strand-specific metallo-endoribonuclease involved in late-stage 70S ribosome quality control and in maturation of the 3' terminus of the 16S rRNA. In Petrotoga mobilis (strain DSM 10674 / SJ95), this protein is Endoribonuclease YbeY.